A 500-amino-acid chain; its full sequence is Glycerol kinase (500 aa).

T11 contributes to the ADP binding site. ATP-binding residues include T11, T12, and S13. Residue T11 participates in sn-glycerol 3-phosphate binding. R15 serves as a coordination point for ADP. The sn-glycerol 3-phosphate site is built by R81, E82, Y133, and D242. Positions 81, 82, 133, 242, and 243 each coordinate glycerol. Residues T264 and G307 each coordinate ADP. ATP contacts are provided by T264, G307, Q311, and G411. An ADP-binding site is contributed by G411.

Belongs to the FGGY kinase family.

It catalyses the reaction glycerol + ATP = sn-glycerol 3-phosphate + ADP + H(+). It functions in the pathway polyol metabolism; glycerol degradation via glycerol kinase pathway; sn-glycerol 3-phosphate from glycerol: step 1/1. Its activity is regulated as follows. Inhibited by fructose 1,6-bisphosphate (FBP). Its function is as follows. Key enzyme in the regulation of glycerol uptake and metabolism. Catalyzes the phosphorylation of glycerol to yield sn-glycerol 3-phosphate. The sequence is that of Glycerol kinase from Bradyrhizobium sp. (strain ORS 278).